The sequence spans 229 residues: Endonuclease V (229 aa).

Belongs to the endonuclease V family.

It is found in the cytoplasm. The enzyme catalyses Endonucleolytic cleavage at apurinic or apyrimidinic sites to products with a 5'-phosphate.. In terms of biological role, DNA repair enzyme involved in the repair of deaminated bases. Selectively cleaves double-stranded DNA at the second phosphodiester bond 3' to a deoxyinosine leaving behind the intact lesion on the nicked DNA. This Methanopyrus kandleri (strain AV19 / DSM 6324 / JCM 9639 / NBRC 100938) protein is Endonuclease V.